The chain runs to 572 residues: Hexokinase (572 aa).

Positions 49–492 (DEPPISLETV…SGKGAALITA (444 aa)) constitute a Hexokinase domain. The hexokinase small subdomain stretch occupies residues 105 to 237 (NGTEEGRFIA…DIKVEVVALI (133 aa)). D-glucose 6-phosphate contacts are provided by residues 116 to 120 (DLGGT) and serine 185. 116–121 (DLGGTN) contacts ATP. Residues 185-186 (SY), 202-203 (TK), and 238-239 (ND) each bind substrate. Residues 238 to 481 (NDTVGTMVAA…LKFKLLQTAD (244 aa)) form a hexokinase large subdomain region. Residues aspartate 239 and threonine 263 each coordinate D-glucose 6-phosphate. Residue threonine 263 coordinates ATP. Substrate-binding residues include asparagine 266, glutamate 297, and aspartate 331. ATP-binding positions include 336-337 (GK), 373-377 (TKYIS), and 448-452 (STYKY). D-glucose 6-phosphate-binding positions include 446-448 (DGS) and serine 483.

Belongs to the hexokinase family.

The enzyme catalyses a D-hexose + ATP = a D-hexose 6-phosphate + ADP + H(+). The catalysed reaction is D-mannose + ATP = D-mannose 6-phosphate + ADP + H(+). It catalyses the reaction D-fructose + ATP = D-fructose 6-phosphate + ADP + H(+). It carries out the reaction D-glucose + ATP = D-glucose 6-phosphate + ADP + H(+). The protein operates within carbohydrate metabolism; hexose metabolism. It participates in carbohydrate degradation; glycolysis; D-glyceraldehyde 3-phosphate and glycerone phosphate from D-glucose: step 1/4. With respect to regulation, activated by glucose-6-phosphate. Inhibited by N-acetylglucosamine, glucosamine, mannoheptulose and ADP. Active against glucose, fructose, mannose, maltose and galactose. The polypeptide is Hexokinase (Brugia malayi (Filarial nematode worm)).